Consider the following 161-residue polypeptide: Endoribonuclease YbeY (161 aa).

3 residues coordinate Zn(2+): histidine 127, histidine 131, and histidine 137.

It belongs to the endoribonuclease YbeY family. Requires Zn(2+) as cofactor.

The protein localises to the cytoplasm. Functionally, single strand-specific metallo-endoribonuclease involved in late-stage 70S ribosome quality control and in maturation of the 3' terminus of the 16S rRNA. In Listeria monocytogenes serotype 4a (strain HCC23), this protein is Endoribonuclease YbeY.